We begin with the raw amino-acid sequence, 385 residues long: 8-amino-7-oxononanoate synthase (385 aa).

Residue arginine 21 coordinates substrate. 108-109 lines the pyridoxal 5'-phosphate pocket; the sequence is GF. Residue histidine 133 coordinates substrate. The pyridoxal 5'-phosphate site is built by serine 179, histidine 207, and threonine 233. Residue lysine 236 is modified to N6-(pyridoxal phosphate)lysine. Threonine 352 serves as a coordination point for substrate.

This sequence belongs to the class-II pyridoxal-phosphate-dependent aminotransferase family. BioF subfamily. Homodimer. Pyridoxal 5'-phosphate serves as cofactor.

The enzyme catalyses 6-carboxyhexanoyl-[ACP] + L-alanine + H(+) = (8S)-8-amino-7-oxononanoate + holo-[ACP] + CO2. It participates in cofactor biosynthesis; biotin biosynthesis. Catalyzes the decarboxylative condensation of pimeloyl-[acyl-carrier protein] and L-alanine to produce 8-amino-7-oxononanoate (AON), [acyl-carrier protein], and carbon dioxide. The chain is 8-amino-7-oxononanoate synthase from Salmonella newport (strain SL254).